The chain runs to 146 residues: Ribonuclease H (146 aa).

One can recognise an RNase H type-1 domain in the interval 1–143; the sequence is MKKQVTIYTD…CDQLAREAIK (143 aa). Mg(2+) is bound by residues aspartate 10, glutamate 48, aspartate 70, and aspartate 135.

The protein belongs to the RNase H family. Monomer. Mg(2+) is required as a cofactor.

The protein localises to the cytoplasm. It catalyses the reaction Endonucleolytic cleavage to 5'-phosphomonoester.. Functionally, endonuclease that specifically degrades the RNA of RNA-DNA hybrids. This chain is Ribonuclease H, found in Chlorobium chlorochromatii (strain CaD3).